The sequence spans 349 residues: AA9 family lytic polysaccharide monooxygenase C (349 aa).

The N-terminal stretch at 1-19 (MKSTFGLLALAAAAKLVSA) is a signal peptide. The Cu(2+) site is built by H20 and H102. The cysteines at positions 62 and 183 are disulfide-linked. H169 lines the O2 pocket. Cu(2+) is bound at residue Y180. The disordered stretch occupies residues 233 to 304 (DGSSSGSSGS…SGSNSGSDSC (72 aa)). 2 stretches are compositionally biased toward low complexity: residues 234–262 (GSSS…AAPT) and 269–304 (TSAT…SDSC). Residues 311 to 347 (GSVKIYGQCGGQNYSGPTSCEAGLICKEWNPYYHQCV) form the CBM1 domain. 2 disulfide bridges follow: C319-C336 and C330-C346. N323 carries N-linked (GlcNAc...) asparagine glycosylation.

The protein belongs to the polysaccharide monooxygenase AA9 family. It depends on Cu(2+) as a cofactor.

The protein resides in the secreted. It catalyses the reaction [(1-&gt;4)-beta-D-glucosyl]n+m + reduced acceptor + O2 = 4-dehydro-beta-D-glucosyl-[(1-&gt;4)-beta-D-glucosyl]n-1 + [(1-&gt;4)-beta-D-glucosyl]m + acceptor + H2O.. Lytic polysaccharide monooxygenase (LPMO) that depolymerizes crystalline and amorphous polysaccharides via the oxidation of scissile alpha- or beta-(1-4)-glycosidic bonds, yielding C4 oxidation products. Catalysis by LPMOs requires the reduction of the active-site copper from Cu(II) to Cu(I) by a reducing agent and H(2)O(2) or O(2) as a cosubstrate. Active on cellulose and cello-oligosaccharides, as well as plant cell wall-derived hemicellulosic polysaccharides. Also active on cello-oligosaccharides such as cellohexaose, cellopentaose or cellotetraose. This is AA9 family lytic polysaccharide monooxygenase C from Aspergillus fumigatus (strain ATCC MYA-4609 / CBS 101355 / FGSC A1100 / Af293) (Neosartorya fumigata).